Consider the following 185-residue polypeptide: Thiol:disulfide interchange protein DsbE (185 aa).

Residues 1-4 (MKRN) are Cytoplasmic-facing. A helical membrane pass occupies residues 5 to 25 (VLLLPLLIFLLIAAALLWQLA). Topologically, residues 26–185 (RNAQGDDPTN…WDRYSREAAQ (160 aa)) are periplasmic. Positions 39 to 177 (ALTGKPVPAF…WESELKPLWD (139 aa)) constitute a Thioredoxin domain. Cys-80 and Cys-83 form a disulfide bridge.

This sequence belongs to the thioredoxin family. DsbE subfamily.

The protein localises to the cell inner membrane. Functionally, involved in disulfide bond formation. Catalyzes a late, reductive step in the assembly of periplasmic c-type cytochromes, probably the reduction of disulfide bonds of the apocytochrome c to allow covalent linkage with the heme. Possible subunit of a heme lyase. The polypeptide is Thiol:disulfide interchange protein DsbE (dsbE1) (Salmonella typhimurium (strain LT2 / SGSC1412 / ATCC 700720)).